The following is an 884-amino-acid chain: Alanine--tRNA ligase (884 aa).

Residues His562, His566, Cys674, and His678 each coordinate Zn(2+).

Belongs to the class-II aminoacyl-tRNA synthetase family. It depends on Zn(2+) as a cofactor.

The protein localises to the cytoplasm. The catalysed reaction is tRNA(Ala) + L-alanine + ATP = L-alanyl-tRNA(Ala) + AMP + diphosphate. Catalyzes the attachment of alanine to tRNA(Ala) in a two-step reaction: alanine is first activated by ATP to form Ala-AMP and then transferred to the acceptor end of tRNA(Ala). Also edits incorrectly charged Ser-tRNA(Ala) and Gly-tRNA(Ala) via its editing domain. This Rhizobium etli (strain ATCC 51251 / DSM 11541 / JCM 21823 / NBRC 15573 / CFN 42) protein is Alanine--tRNA ligase.